Consider the following 105-residue polypeptide: MTSHFVTRDGSTWMPQYLTAIDAMTCIGCGRCFKVCSREVMHLHGIDESGEILGACDGEDDDFAGELSRTIMVVDHAGRCIGCGACARVCPKNCQTHVAADEIVA.

4Fe-4S ferredoxin-type domains are found at residues 17–46 (YLTA…LHGI) and 70–100 (TIMV…HVAA). Positions 26, 29, 32, 36, 80, 83, 86, and 90 each coordinate [4Fe-4S] cluster.

[4Fe-4S] cluster is required as a cofactor.

Its function is as follows. Ferredoxins are iron-sulfur proteins that transfer electrons in a wide variety of metabolic reactions. The chain is Putative ferredoxin-3 (fdxB) from Sinorhizobium fredii (strain NBRC 101917 / NGR234).